The sequence spans 283 residues: Vitamin K epoxide reductase homolog (283 aa).

At 1-20 the chain is on the cytoplasmic side; that stretch reads MASYLKLKAQEETWLQRHSR. The helical transmembrane segment at 21 to 41 threads the bilayer; sequence LILAILAGLGSLLTAYLTYTK. Residues 42–66 are Periplasmic-facing; that stretch reads LTEQPAAFCTGDGGCDLVLSSRWAE. Cysteines 50 and 56 form a disulfide. 59–65 contributes to the a quinone binding site; the sequence is VLSSRWA. The helical transmembrane segment at 67–87 threads the bilayer; the sequence is FLGIPTAAVGLLGFLGVLALA. Topologically, residues 88 to 102 are cytoplasmic; the sequence is VLPDGLPLVKRWRWP. Residues 103–123 form a helical membrane-spanning segment; sequence ALFGLVSAMTAFEMYMLYLMV. 111–122 serves as a coordination point for a quinone; it reads MTAFEMYMLYLM. The Periplasmic segment spans residues 124 to 128; sequence AVLRQ. Residues 129–149 traverse the membrane as a helical segment; that stretch reads FCMYCTTAIILVAGLGLVTVL. C130 and C133 form a disulfide bridge. The Cytoplasmic portion of the chain corresponds to 150-158; the sequence is GHRWLDGGK. Residues 159–179 traverse the membrane as a helical segment; the sequence is LAFSYILVAFLTLVTTIGVYA. Over 180 to 283 the chain is Periplasmic; the sequence is NQVPPPSPLA…ASGYPLEEGR (104 aa). A thioredoxin-like domain region spans residues 186–283; sequence SPLAVGLAAH…ASGYPLEEGR (98 aa). Cystine bridges form between C209–C212 and C231–C244.

This sequence belongs to the VKOR family.

Its subcellular location is the membrane. Its activity is regulated as follows. Inhibited by ferulenol. Functionally, thiol-disulfide oxidoreductase that catalyzes vitamin K-dependent disulfide bond formation in periplasmic target proteins. This Synechococcus sp. (strain JA-2-3B'a(2-13)) (Cyanobacteria bacterium Yellowstone B-Prime) protein is Vitamin K epoxide reductase homolog.